Consider the following 738-residue polypeptide: Conserved oligomeric Golgi complex subunit 4 (738 aa).

This sequence belongs to the COG4 family. As to quaternary structure, component of the conserved oligomeric Golgi complex which is composed of eight different subunits and is required for normal Golgi morphology and localization. Interacts with COG2 and COG3.

It is found in the golgi apparatus membrane. Required for normal Golgi function. The protein is Conserved oligomeric Golgi complex subunit 4 of Arabidopsis thaliana (Mouse-ear cress).